A 331-amino-acid polypeptide reads, in one-letter code: Phenol 2-monooxygenase, oxygenase component DmpL (331 aa).

It belongs to the TmoE/XamoE family. As to quaternary structure, the multicomponent enzyme phenol hydroxylase is formed by DmpL (P1 component), DmpM (P2 component), DmpN (P3 component), DmpO (P4 component) and DmpP (P5 component). The oxygenase component is a dimer composed of three subunits, DmpL, DmpN and DmpO (DmpLNO). DmpL interacts with the auxiliary protein DmpK (P0 component).

The enzyme catalyses phenol + NADH + O2 + H(+) = catechol + NAD(+) + H2O. The protein operates within aromatic compound metabolism; phenol degradation. Its activity is regulated as follows. Requires DmpM for efficient turnover. The activity of DmpLNO oxygenase is inhibited by dithiothreitol (DTT) by a mechanism apparently involving H(2)O(2) generation. Its function is as follows. Part of a multicomponent enzyme which catalyzes the degradation of phenol and some of its methylated derivatives. DmpL, DmpN and DmpO form the oxygenase component of the complex. Required for growth on phenol and for in vitro phenol hydroxylase activity. The sequence is that of Phenol 2-monooxygenase, oxygenase component DmpL from Pseudomonas sp. (strain CF600).